The sequence spans 163 residues: NADH-quinone oxidoreductase subunit I (163 aa).

4Fe-4S ferredoxin-type domains lie at 54 to 84 (LRRY…IDSA) and 94 to 123 (TRYD…ETHI). [4Fe-4S] cluster is bound by residues Cys-64, Cys-67, Cys-70, Cys-74, Cys-103, Cys-106, Cys-109, and Cys-113.

It belongs to the complex I 23 kDa subunit family. As to quaternary structure, NDH-1 is composed of 14 different subunits. Subunits NuoA, H, J, K, L, M, N constitute the membrane sector of the complex. Requires [4Fe-4S] cluster as cofactor.

It localises to the cell inner membrane. The catalysed reaction is a quinone + NADH + 5 H(+)(in) = a quinol + NAD(+) + 4 H(+)(out). NDH-1 shuttles electrons from NADH, via FMN and iron-sulfur (Fe-S) centers, to quinones in the respiratory chain. The immediate electron acceptor for the enzyme in this species is believed to be ubiquinone. Couples the redox reaction to proton translocation (for every two electrons transferred, four hydrogen ions are translocated across the cytoplasmic membrane), and thus conserves the redox energy in a proton gradient. The polypeptide is NADH-quinone oxidoreductase subunit I (Xanthomonas campestris pv. campestris (strain 8004)).